The primary structure comprises 152 residues: Aspartate carbamoyltransferase regulatory chain (152 aa).

Zn(2+) is bound by residues cysteine 108, cysteine 113, cysteine 137, and cysteine 140.

It belongs to the PyrI family. In terms of assembly, contains catalytic and regulatory chains. Zn(2+) serves as cofactor.

Functionally, involved in allosteric regulation of aspartate carbamoyltransferase. The sequence is that of Aspartate carbamoyltransferase regulatory chain from Neisseria gonorrhoeae (strain ATCC 700825 / FA 1090).